The primary structure comprises 479 residues: MVMAAKKGPGPGGGVGGSKAEAEAASEVWCRRVRELGGCSQAGNRHCFECAQRGVTYVDITVGSFVCTTCSGLLRGLNPPHRVKSISMTTFTEPEVLFLQSRGNEVCRKIWLGLFDARTSLIPDSRDPQKVKEFLQEKYEKKRWYVPPEQVKGPSYSKGSVSATPVQGSVPEGKPIRTLLGDPVPSLSDPASTSSQPGSQSQARSSSQARSSQPPSHSSTKKASTDLLADIGGDPFAAPQVVPAFASFPGFGVGQTPAHGGFANFDAFSSSPSSSTFGSLPPSVQAPFQAQPTPAGSGQMSAFGVAPLAAASQPNNLADVGGLLGPRMAAGGLPGSVFGMPSQVPALQSAVPGVSGSGGLPFGAYTNPFATPAQAQLPSTNPFQPNGLASGPGFGMSSVRPGLLQPVPPSGAFASPFSAPVFPTQAGLADQQNGSSFGDLGTSKLGQRPLSQPAGISTNPFMTGSSAFASKPPTTNPFL.

An Arf-GAP domain is found at 27–153 (EVWCRRVREL…WYVPPEQVKG (127 aa)). The C4-type zinc-finger motif lies at 47-70 (CFECAQRGVTYVDITVGSFVCTTC). Disordered stretches follow at residues 150–223 (QVKG…TKKA) and 450–479 (LSQPAGISTNPFMTGSSAFASKPPTTNPFL). Residues 157–167 (SKGSVSATPVQ) are compositionally biased toward polar residues. Position 174 is an N6-acetyllysine (K174). Low complexity predominate over residues 194-218 (SSQPGSQSQARSSSQARSSQPPSHS). Residues 454–479 (AGISTNPFMTGSSAFASKPPTTNPFL) are compositionally biased toward polar residues.

Interacts with EPS15R.

The protein is Arf-GAP domain and FG repeat-containing protein 2 (Agfg2) of Mus musculus (Mouse).